The sequence spans 171 residues: UPF0398 protein Sez_1569 (171 aa).

This sequence belongs to the UPF0398 family.

In Streptococcus equi subsp. zooepidemicus (strain MGCS10565), this protein is UPF0398 protein Sez_1569.